The sequence spans 296 residues: Ribosomal RNA small subunit methyltransferase J (296 aa).

Residue Asp-205 coordinates S-adenosyl-L-methionine.

The protein belongs to the methyltransferase superfamily. RsmJ family.

The protein resides in the cytoplasm. It catalyses the reaction guanosine(1516) in 16S rRNA + S-adenosyl-L-methionine = N(2)-methylguanosine(1516) in 16S rRNA + S-adenosyl-L-homocysteine + H(+). Functionally, specifically methylates the guanosine in position 1516 of 16S rRNA. The protein is Ribosomal RNA small subunit methyltransferase J of Psychrobacter arcticus (strain DSM 17307 / VKM B-2377 / 273-4).